A 482-amino-acid polypeptide reads, in one-letter code: Malvidin galactosylase UGT88C3 (482 aa).

His-16 (proton acceptor) is an active-site residue. Asp-117 serves as the catalytic Charge relay. 7 residues coordinate UDP: Ser-279, Trp-345, Ala-349, His-366, Asn-370, Ser-371, and Glu-374.

Belongs to the UDP-glycosyltransferase family.

It localises to the endoplasmic reticulum. It is found in the nucleus. It catalyses the reaction malvidin + UDP-alpha-D-galactose = malvidin 3-O-beta-D-galactoside + UDP + H(+). Its pathway is pigment biosynthesis; anthocyanin biosynthesis. Its function is as follows. UDP-glycosyltransferase which uses UDP-galactose and malvidin as substrates to catalyze the biosynthesis of malvidin 3-O-galactoside, an anthocyanin conferring purple pigmentation. The sequence is that of Malvidin galactosylase UGT88C3 from Oryza sativa subsp. indica (Rice).